We begin with the raw amino-acid sequence, 368 residues long: Branched-chain-amino-acid aminotransferase (368 aa).

Arg101 is a pyridoxal 5'-phosphate binding site. N6-(pyridoxal phosphate)lysine is present on Lys204. Pyridoxal 5'-phosphate is bound by residues Tyr209 and 271 to 272; that span reads IT. Residue Lys299 forms an Isoglutamyl lysine isopeptide (Lys-Gln) (interchain with Q-Cter in protein Pup) linkage. Thr314 is a binding site for pyridoxal 5'-phosphate.

The protein belongs to the class-IV pyridoxal-phosphate-dependent aminotransferase family. In terms of assembly, homodimer. The cofactor is pyridoxal 5'-phosphate.

It catalyses the reaction L-isoleucine + 2-oxoglutarate = (S)-3-methyl-2-oxopentanoate + L-glutamate. The enzyme catalyses L-valine + 2-oxoglutarate = 3-methyl-2-oxobutanoate + L-glutamate. The catalysed reaction is L-leucine + 2-oxoglutarate = 4-methyl-2-oxopentanoate + L-glutamate. Its pathway is amino-acid biosynthesis; L-isoleucine biosynthesis; L-isoleucine from 2-oxobutanoate: step 4/4. It functions in the pathway amino-acid biosynthesis; L-leucine biosynthesis; L-leucine from 3-methyl-2-oxobutanoate: step 4/4. It participates in amino-acid biosynthesis; L-valine biosynthesis; L-valine from pyruvate: step 4/4. With respect to regulation, inhibited by ammonium sulfate at millimolar concentrations and by O-benzylhydroxylamine (Obe). In terms of biological role, catalyzes the reversible transfers of an amino group from glutamate to the alpha-ketoacid of the respective amino acid in the final step in the biosynthesis of branchedchain amino acids. The amino acids can be ranked in the following order with respect to their efficiency as amino donor: Leu &gt; Ile &gt; Val. The sequence is that of Branched-chain-amino-acid aminotransferase (ilvE) from Mycolicibacterium smegmatis (strain ATCC 700084 / mc(2)155) (Mycobacterium smegmatis).